A 600-amino-acid polypeptide reads, in one-letter code: ATP-dependent zinc metalloprotease FtsH 1 (600 aa).

The Cytoplasmic portion of the chain corresponds to 1–8 (MKTHYFKK). Residues 9 to 29 (IFNLKFLVIFFSILFCILLIL) traverse the membrane as a helical segment. The Extracellular segment spans residues 30 to 130 (DLTFERRIKG…PKTDFHLSEL (101 aa)). A helical transmembrane segment spans residues 131–151 (ILSLVPIVSSTIFMFYIISNI). Topologically, residues 152-600 (KKSSGKLNSN…IEQLVVNTKK (449 aa)) are cytoplasmic. 215 to 222 (GPPGTGKT) serves as a coordination point for ATP. His437 contacts Zn(2+). The active site involves Glu438. Zn(2+)-binding residues include His441 and Asp513.

In the central section; belongs to the AAA ATPase family. It in the C-terminal section; belongs to the peptidase M41 family. In terms of assembly, homohexamer. It depends on Zn(2+) as a cofactor.

Its subcellular location is the cell membrane. Functionally, acts as a processive, ATP-dependent zinc metallopeptidase for both cytoplasmic and membrane proteins. Plays a role in the quality control of integral membrane proteins. The sequence is that of ATP-dependent zinc metalloprotease FtsH 1 from Phytoplasma mali (strain AT).